The sequence spans 1324 residues: Structural maintenance of chromosomes protein 4 (1324 aa).

The segment at 1 to 24 is disordered; the sequence is MSDKGIFRTSSTPSIVDVTPDRGE. Phosphothreonine; by CDC2 is present on Thr-19. Residue 155–162 participates in ATP binding; that stretch reads GPNGSGKS. Coiled-coil stretches lie at residues 310–337 and 370–628; these read QELS…AKLE and NKKT…KASL. Residues 651–764 form the SMC hinge domain; sequence NGFFGRLGDL…KNLEQANRIA (114 aa). Coiled-coil stretches lie at residues 825 to 1077 and 1297 to 1324; these read YRQH…MSNL and LSSR…ILTD.

This sequence belongs to the SMC family. SMC4 subfamily. As to quaternary structure, forms a heterodimer with cut14/smc2. Component of the condensin complex, which contains the smc2 and smc4 heterodimer, and three non smc subunits that probably regulate the complex: cnd1, cnd2 and cnd3. Interacts with C1739.07. Phosphorylated by CDC2 on Thr-19 at metaphase.

It is found in the nucleus. The protein localises to the cytoplasm. It localises to the chromosome. In terms of biological role, central component of the condensin complex, a complex required for conversion of interphase chromatin into mitotic-like condense chromosomes. The condensin complex probably introduces positive supercoils into relaxed DNA in the presence of type I topoisomerases and converts nicked DNA into positive knotted forms in the presence of type II topoisomerases. The polypeptide is Structural maintenance of chromosomes protein 4 (cut3) (Schizosaccharomyces pombe (strain 972 / ATCC 24843) (Fission yeast)).